A 355-amino-acid polypeptide reads, in one-letter code: Putative L-lysine 2,3-aminomutase (355 aa).

A Radical SAM core domain is found at 93–308; it reads VHQYANRVLM…KERLSGLSLP (216 aa). The [4Fe-4S] cluster site is built by Cys-108, Cys-112, and Cys-115. Lys-320 is modified (N6-(pyridoxal phosphate)lysine).

It belongs to the radical SAM superfamily. KamA family. The cofactor is [4Fe-4S] cluster. It depends on pyridoxal 5'-phosphate as a cofactor.

The protein is Putative L-lysine 2,3-aminomutase of Treponema pallidum (strain Nichols).